The primary structure comprises 222 residues: MSTPRQILAAIFDMDGLLIDSEPLWDRAELDVMASLGVDISRRNELPDTLGLRIDMVVDLWYARQPWNGPSRQEVVERVIARAISLVEETRPLLPGVREAVALCKEQGLLVGLASASPLHMLEKVLTMFDLRDSFDALASAEKLPYSKPHPQVYLDCAAKLGVDPLTCVALEDSVNGMIASKAARMRSIVVPAPEAQNDPRFVLANVKLSSLTELTAKDLLG.

The Nucleophile role is filled by Asp13. Residues Asp13 and Asp15 each contribute to the a divalent metal cation site. Substrate is bound by residues 13 to 15 (DMD), 115 to 116 (SA), and Lys148. Asp15 serves as the catalytic Proton donor. An a divalent metal cation-binding site is contributed by Asp173.

Belongs to the HAD-like hydrolase superfamily. CbbY/CbbZ/Gph/YieH family. Mg(2+) serves as cofactor. It depends on Mn(2+) as a cofactor. Co(2+) is required as a cofactor. Requires Zn(2+) as cofactor.

It carries out the reaction sugar phosphate + H2O = sugar + phosphate.. It catalyses the reaction 2-deoxy-D-glucose 6-phosphate + H2O = 2-deoxy-D-glucose + phosphate. The enzyme catalyses D-mannitol 1-phosphate + H2O = D-mannitol + phosphate. The catalysed reaction is D-sorbitol 6-phosphate + H2O = D-sorbitol + phosphate. Sugar-phosphate phosphohydrolase that catalyzes the dephosphorylation of D-mannitol 1-phosphate and D-sorbitol 6-phosphate. Also catalyzes the dephosphorylation of 2-deoxyglucose 6-phosphate (2dGlu6P); this is a biologically important activity in vivo since it contributes to the elimination of this toxic compound and plays an important role in the resistance of E.coli to 2-deoxyglucose. The protein is Hexitol phosphatase B of Escherichia coli O157:H7.